The sequence spans 243 residues: Polycomb group RING finger protein 1 (243 aa).

Residue K12 forms a Glycyl lysine isopeptide (Lys-Gly) (interchain with G-Cter in SUMO2) linkage. An RING-type zinc finger spans residues 35 to 74; the sequence is CCLCAGYFVDATTITECLHTFCKSCIVKYLQTSKYCPMCN. The tract at residues 74–231 is necessary for repressor activity; it reads NIKIHETQPL…LSRWFGKPSP (158 aa). K76 participates in a covalent cross-link: Glycyl lysine isopeptide (Lys-Gly) (interchain with G-Cter in SUMO2). A required for the interaction with the KDM2B-SKP1 heterodimeric complex region spans residues 138–239; it reads LPFTSFDHYY…SPLLLQYSVK (102 aa). The RING-finger and WD40-associated ubiquitin-like domain (RAWUL); sufficient for interaction with BCOR and BCORL1 stretch occupies residues 151-239; that stretch reads EQLSLCLERL…SPLLLQYSVK (89 aa).

As to quaternary structure, interacts with BCORL1, forming heterodimers. The PCGF1-BCORL1 heterodimeric complex interacts with the KDM2B-SKP1 heterodimeric complex to form a homotetrameric polycomb repression complex 1 (PRC1.1). Component of the repressive BCOR complex containing a Polycomb group subcomplex at least composed of RYBP, RING1 and RNF2/RING2. Specifically interacts with BCOR, RING1 and RNF2/RING2. Component of a PRC1-like complex. Interacts with CBX6, CBX7 and CBX8. Interacts with DPPA4, NANOG, POU5F1 and RYBP. As to expression, highly expressed in brain, cerebellum, heart and testis.

The protein resides in the nucleus. Component of the Polycomb group (PcG) multiprotein BCOR complex, a complex required to maintain the transcriptionally repressive state of some genes, such as BCL6 and the cyclin-dependent kinase inhibitor, CDKN1A. Transcriptional repressor that may be targeted to the DNA by BCL6; this transcription repressor activity may be related to PKC signaling pathway. Represses CDKN1A expression by binding to its promoter, and this repression is dependent on the retinoic acid response element (RARE element). Promotes cell cycle progression and enhances cell proliferation as well. May have a positive role in tumor cell growth by down-regulating CDKN1A. Component of a Polycomb group (PcG) multiprotein PRC1-like complex, a complex class required to maintain the transcriptionally repressive state of many genes, including Hox genes, throughout development. PcG PRC1 complex acts via chromatin remodeling and modification of histones; it mediates monoubiquitination of histone H2A 'Lys-119', rendering chromatin heritably changed in its expressibility. Within the PRC1-like complex, regulates RNF2 ubiquitin ligase activity. Regulates the expression of DPPA4 and NANOG in the NT2 embryonic carcinoma cells. This Rattus norvegicus (Rat) protein is Polycomb group RING finger protein 1 (Pcgf1).